The following is a 602-amino-acid chain: GTP-binding protein 2 (602 aa).

The segment at 16 to 64 (GGGPAVGGTLKARGAGSSSGCGGPKGKKKNGRNRGGKANNPPYLPPEAE) is disordered. Positions 40–50 (KGKKKNGRNRG) are enriched in basic residues. The 229-residue stretch at 170–398 (FLDLRVAVLG…LNILPPLTNS (229 aa)) folds into the tr-type G domain. GTP-binding positions include 179–186 (GNVDSGKS), 260–264 (DLAGH), and 316–319 (SKID).

This sequence belongs to the TRAFAC class translation factor GTPase superfamily. Classic translation factor GTPase family. GTPBP1 subfamily. As to expression, predominantly expressed in thymus, spleen, and testis. Expressed at lower levels in brain, lung, kidney, and ovary.

This is GTP-binding protein 2 from Homo sapiens (Human).